The following is a 211-amino-acid chain: MRNIQIALTKGRLEKHVIPLFEQIGIDCSELKNKGRKLVFQSKNTNVSFILVKAVDVATYVEHGVADIGIVGKDILMENEKDIYEMLDLGVGICKFCVASIPTYNPKSYRKKRIATKYPHITSTYFHDKGEDVEIIKIEGSVEIAPLLGLADAIVDIVETGKTLQENGLIVFEEMYFISARMIVNKAALKTKKDEIFSIINMMEQEILSGK.

It belongs to the ATP phosphoribosyltransferase family. Short subfamily. In terms of assembly, heteromultimer composed of HisG and HisZ subunits.

The protein resides in the cytoplasm. It catalyses the reaction 1-(5-phospho-beta-D-ribosyl)-ATP + diphosphate = 5-phospho-alpha-D-ribose 1-diphosphate + ATP. Its pathway is amino-acid biosynthesis; L-histidine biosynthesis; L-histidine from 5-phospho-alpha-D-ribose 1-diphosphate: step 1/9. Its function is as follows. Catalyzes the condensation of ATP and 5-phosphoribose 1-diphosphate to form N'-(5'-phosphoribosyl)-ATP (PR-ATP). Has a crucial role in the pathway because the rate of histidine biosynthesis seems to be controlled primarily by regulation of HisG enzymatic activity. In Bacillus cereus (strain ATCC 14579 / DSM 31 / CCUG 7414 / JCM 2152 / NBRC 15305 / NCIMB 9373 / NCTC 2599 / NRRL B-3711), this protein is ATP phosphoribosyltransferase.